We begin with the raw amino-acid sequence, 487 residues long: Cytochrome c-552 (487 aa).

The N-terminal stretch at 1–27 is a signal peptide; the sequence is MSKKWTRNTAAMAAILSALCLSTNALA. Residue His-104 coordinates heme c. The heme site is built by Cys-132, Cys-135, and Lys-136. Residues Cys-170, Cys-173, His-174, Cys-219, Cys-222, and His-223 each contribute to the heme c site. The Ca(2+) site is built by Glu-225, Tyr-226, Lys-271, and Gln-273. Residue Tyr-226 coordinates substrate. Residue His-274 coordinates substrate. Heme c-binding residues include His-285, Cys-292, Cys-295, His-296, His-311, Cys-324, Cys-327, His-328, and His-403.

Belongs to the cytochrome c-552 family. The cofactor is Ca(2+). Heme c is required as a cofactor.

The protein resides in the periplasm. The catalysed reaction is 6 Fe(III)-[cytochrome c] + NH4(+) + 2 H2O = 6 Fe(II)-[cytochrome c] + nitrite + 8 H(+). The protein operates within nitrogen metabolism; nitrate reduction (assimilation). In terms of biological role, catalyzes the reduction of nitrite to ammonia, consuming six electrons in the process. This chain is Cytochrome c-552, found in Photobacterium profundum (strain SS9).